Reading from the N-terminus, the 224-residue chain is Serum amyloid P-component (224 aa).

The N-terminal stretch at 1 to 19 is a signal peptide; it reads MERLLLWVSVLASLPEAFA. Residues 24 to 224 form the Pentraxin (PTX) domain; the sequence is TGKVFVFPRE…YVVIKPRVWS (201 aa). N-linked (GlcNAc...) asparagine glycosylation occurs at Asn51. Cysteines 55 and 114 form a disulfide. 6 residues coordinate Ca(2+): Asp77, Asn78, Glu155, Gln156, Asp157, and Gln167.

Belongs to the pentraxin family. As to quaternary structure, homopentamer. Pentraxin (or pentaxin) have a discoid arrangement of 5 non-covalently bound subunits. Ca(2+) is required as a cofactor.

Its subcellular location is the secreted. In Sus scrofa (Pig), this protein is Serum amyloid P-component (APCS).